Reading from the N-terminus, the 308-residue chain is Transaldolase (308 aa).

The active-site Schiff-base intermediate with substrate is the K125.

Belongs to the transaldolase family. Type 1 subfamily. Homodimer.

The protein localises to the cytoplasm. It catalyses the reaction D-sedoheptulose 7-phosphate + D-glyceraldehyde 3-phosphate = D-erythrose 4-phosphate + beta-D-fructose 6-phosphate. It participates in carbohydrate degradation; pentose phosphate pathway; D-glyceraldehyde 3-phosphate and beta-D-fructose 6-phosphate from D-ribose 5-phosphate and D-xylulose 5-phosphate (non-oxidative stage): step 2/3. Its function is as follows. Transaldolase is important for the balance of metabolites in the pentose-phosphate pathway. The chain is Transaldolase from Stutzerimonas stutzeri (strain A1501) (Pseudomonas stutzeri).